Reading from the N-terminus, the 474-residue chain is Glutamate--tRNA ligase (474 aa).

A 'HIGH' region motif is present at residues 11–21 (PSPTGFLHIGG). The short motif at 240–244 (KLSKR) is the 'KMSKS' region element. K243 is an ATP binding site.

This sequence belongs to the class-I aminoacyl-tRNA synthetase family. Glutamate--tRNA ligase type 1 subfamily. As to quaternary structure, monomer.

It localises to the cytoplasm. The enzyme catalyses tRNA(Glu) + L-glutamate + ATP = L-glutamyl-tRNA(Glu) + AMP + diphosphate. Functionally, catalyzes the attachment of glutamate to tRNA(Glu) in a two-step reaction: glutamate is first activated by ATP to form Glu-AMP and then transferred to the acceptor end of tRNA(Glu). This is Glutamate--tRNA ligase from Nitrobacter hamburgensis (strain DSM 10229 / NCIMB 13809 / X14).